A 466-amino-acid polypeptide reads, in one-letter code: 55 kDa erythrocyte membrane protein (466 aa).

Threonine 2 bears the N-acetylthreonine mark. Phosphoserine occurs at positions 13 and 19. Threonine 49 bears the Phosphothreonine mark. Phosphoserine occurs at positions 52, 57, and 110. One can recognise a PDZ domain in the interval 71 to 152; the sequence is LIQFEKVTEE…MISLKVIPNQ (82 aa). In terms of domain architecture, SH3 spans 158 to 228; it reads ALQMFMRAQF…PSPELQEWRV (71 aa). The residue at position 243 (serine 243) is a Phosphoserine. Residues 268 to 466 are interaction with PALS1; sequence VVSYEEVVRL…PQWVPVSWVY (199 aa). Residues 282–451 form the Guanylate kinase-like domain; it reads RKTLVLIGAS…TLKKLQEAFD (170 aa).

It belongs to the MAGUK family. Heterodimer with PALS1. Interacts with DLG5 and NF2. Interacts (via guanylate kinase-like domain) with WHRN (via third PDZ domain). Palmitoylated. As to expression, ubiquitous.

The protein resides in the cell membrane. Its subcellular location is the cell projection. It is found in the stereocilium. Functionally, essential regulator of neutrophil polarity. Regulates neutrophil polarization by regulating AKT1 phosphorylation through a mechanism that is independent of PIK3CG activity. This is 55 kDa erythrocyte membrane protein (MPP1) from Homo sapiens (Human).